The following is a 312-amino-acid chain: Zinc transporter ZitB (312 aa).

5 consecutive transmembrane segments (helical) span residues 21–41 (LLFA…GGIL), 48–68 (LADA…LLAV), 90–110 (AAFV…WEAI), 123–143 (LMMV…WILH), and 164–184 (LLGS…GWTP).

This sequence belongs to the cation diffusion facilitator (CDF) transporter (TC 2.A.4) family. SLC30A subfamily.

The protein resides in the cell inner membrane. Involved in zinc efflux across the cytoplasmic membrane, thus reducing zinc accumulation in the cytoplasm and rendering bacteria more resistant to zinc. It may contribute to zinc homeostasis at low concentrations of zinc. This Salmonella typhimurium (strain LT2 / SGSC1412 / ATCC 700720) protein is Zinc transporter ZitB.